The sequence spans 293 residues: Probable metal transport system membrane protein CPn_0543/CP_0209/CPj0543/CpB0565 (293 aa).

7 helical membrane-spanning segments follow: residues 12–32 (LLIL…GGVM), 41–61 (IVSI…LTLW), 68–88 (LSFF…LCIG), 101–121 (LIAM…SRLP), 140–160 (PSDL…VVLC), 183–203 (LWYF…IYVM), and 253–273 (FPVG…SLCV).

This sequence belongs to the ABC-3 integral membrane protein family.

It is found in the cell inner membrane. Functionally, part of an ATP-driven transport system CPn_0541/CPn_0542/CPn_0543 for a metal. The chain is Probable metal transport system membrane protein CPn_0543/CP_0209/CPj0543/CpB0565 from Chlamydia pneumoniae (Chlamydophila pneumoniae).